A 78-amino-acid chain; its full sequence is Acyl carrier protein (78 aa).

Positions 2 to 77 (SDTVERVKKI…DAVKFIDKAS (76 aa)) constitute a Carrier domain. S37 is subject to O-(pantetheine 4'-phosphoryl)serine.

It belongs to the acyl carrier protein (ACP) family. 4'-phosphopantetheine is transferred from CoA to a specific serine of apo-ACP by AcpS. This modification is essential for activity because fatty acids are bound in thioester linkage to the sulfhydryl of the prosthetic group.

The protein resides in the cytoplasm. It functions in the pathway lipid metabolism; fatty acid biosynthesis. In terms of biological role, carrier of the growing fatty acid chain in fatty acid biosynthesis. The polypeptide is Acyl carrier protein (Bartonella quintana (strain Toulouse) (Rochalimaea quintana)).